We begin with the raw amino-acid sequence, 176 residues long: NAD(P)H-quinone oxidoreductase subunit 6, chloroplastic (176 aa).

The next 5 membrane-spanning stretches (helical) occupy residues 10 to 30 (ILVL…VLLT), 33 to 53 (IYSA…YFLL), 60 to 80 (VAQL…AVMF), 95 to 115 (IGDG…MTTI), and 152 to 172 (FYLP…GAIT).

Belongs to the complex I subunit 6 family. As to quaternary structure, NDH is composed of at least 16 different subunits, 5 of which are encoded in the nucleus.

The protein localises to the plastid. Its subcellular location is the chloroplast thylakoid membrane. The catalysed reaction is a plastoquinone + NADH + (n+1) H(+)(in) = a plastoquinol + NAD(+) + n H(+)(out). It catalyses the reaction a plastoquinone + NADPH + (n+1) H(+)(in) = a plastoquinol + NADP(+) + n H(+)(out). Its function is as follows. NDH shuttles electrons from NAD(P)H:plastoquinone, via FMN and iron-sulfur (Fe-S) centers, to quinones in the photosynthetic chain and possibly in a chloroplast respiratory chain. The immediate electron acceptor for the enzyme in this species is believed to be plastoquinone. Couples the redox reaction to proton translocation, and thus conserves the redox energy in a proton gradient. This chain is NAD(P)H-quinone oxidoreductase subunit 6, chloroplastic (ndhG), found in Saccharum hybrid (Sugarcane).